The following is a 104-amino-acid chain: Iron-sulfur cluster assembly protein CyaY (104 aa).

It belongs to the frataxin family.

In terms of biological role, involved in iron-sulfur (Fe-S) cluster assembly. May act as a regulator of Fe-S biogenesis. The protein is Iron-sulfur cluster assembly protein CyaY of Aliivibrio fischeri (strain ATCC 700601 / ES114) (Vibrio fischeri).